A 382-amino-acid chain; its full sequence is Lactaldehyde reductase (382 aa).

NAD(+) is bound by residues aspartate 38, asparagine 70, 97–98 (GS), 139–143 (TTAGT), asparagine 150, lysine 161, and 180–184 (MMDGM). Fe cation contacts are provided by aspartate 195, histidine 199, histidine 262, and histidine 276.

Belongs to the iron-containing alcohol dehydrogenase family. In terms of assembly, homodimer. The cofactor is Fe cation.

The catalysed reaction is (R)-propane-1,2-diol + NAD(+) = (R)-lactaldehyde + NADH + H(+). It carries out the reaction (S)-propane-1,2-diol + NAD(+) = (S)-lactaldehyde + NADH + H(+). It participates in carbohydrate degradation; L-fucose degradation. The protein is Lactaldehyde reductase (fucO) of Escherichia coli O157:H7.